A 444-amino-acid polypeptide reads, in one-letter code: MIETSQTIPELVSWAKDREFSLNLPTERLVFLLAIAIYNNERLDGEMLEADLVDIFRHTMNAFEQSTDAIATRANNAINELVKQRLLNRFSSEFTEGLAIYRLTPLGVGVSDYYIRQREFSALRLSVQLSIVADEIQRASDSAEEGVENNESEHYWRRNVFAPLKYSVAEIFDSIDLSQRIMDENQQSIKNEIAELLTKDWQAAISSCERLLDETSGNLRELQDTLNAAGDKLQAQLLRIQDCVIGRDDLYFIDQLITDLQSKLDRIISWGQQAIDLWIGYDRHVHKFIRTAIDMDKNRVFSQRLRNSIHHYFDHPWFLWTAQAERLVDLRDEEMVLREDDALGELPEELQYESLSDLHDQIVEHMQGLLIAYRENNRPIDLSLVLKEQLENYPLSRHFDVARIIVDQAVRLGMANDDLSGIYPDWQAINKRGAEVQAHVIDKY.

A leucine-zipper region spans residues 212–240 (LDETSGNLRELQDTLNAAGDKLQAQLLRI).

Belongs to the MukF family. Interacts, and probably forms a ternary complex, with MukE and MukB via its C-terminal region. The complex formation is stimulated by calcium or magnesium. It is required for an interaction between MukE and MukB.

Its subcellular location is the cytoplasm. The protein localises to the nucleoid. Its function is as follows. Involved in chromosome condensation, segregation and cell cycle progression. May participate in facilitating chromosome segregation by condensation DNA from both sides of a centrally located replisome during cell division. Not required for mini-F plasmid partitioning. Probably acts via its interaction with MukB and MukE. Overexpression results in anucleate cells. It has a calcium binding activity. The polypeptide is Chromosome partition protein MukF (Haemophilus influenzae (strain PittGG)).